Consider the following 322-residue polypeptide: Uracil-DNA glycosylase (322 aa).

Asp142 serves as the catalytic Proton acceptor.

It belongs to the uracil-DNA glycosylase (UDG) superfamily. UNG family.

The protein localises to the mitochondrion. It localises to the nucleus. It carries out the reaction Hydrolyzes single-stranded DNA or mismatched double-stranded DNA and polynucleotides, releasing free uracil.. Excises uracil residues from the DNA which can arise as a result of misincorporation of dUMP residues by DNA polymerase or due to deamination of cytosine. The chain is Uracil-DNA glycosylase (ung1) from Schizosaccharomyces pombe (strain 972 / ATCC 24843) (Fission yeast).